A 1903-amino-acid polypeptide reads, in one-letter code: CDK5 regulatory subunit-associated protein 2 (1903 aa).

The tract at residues 51 to 94 (KVSPTRARNMKDFENQITELKKENFNLKLRIYFLEERIQQEFAG) is CM1 motif; interacts with the gTuRC. Residues 244-282 (KSQMASPDENVSSGELRGLSATLREEKERDAEERQKERN) form a disordered region. Residues 246 to 256 (QMASPDENVSS) are compositionally biased toward polar residues. A compositionally biased stretch (basic and acidic residues) spans 266–282 (LREEKERDAEERQKERN). Ser485 and Ser544 each carry phosphoserine. Positions 1022–1044 (GKPGEQEGHETTHSAGRDKEVDS) are disordered. Over residues 1025-1043 (GEQEGHETTHSAGRDKEVD) the composition is skewed to basic and acidic residues. Phosphothreonine is present on Thr1193. A phosphoserine mark is found at Ser1241 and Ser1243. Positions 1349 to 1387 (QHLLPESPEPSASHALSDDEMSEKSFLSREPKPDSETEK) are disordered. Residues 1370–1387 (SEKSFLSREPKPDSETEK) are compositionally biased toward basic and acidic residues. Phosphoserine is present on residues Ser1495, Ser1673, and Ser1676. The interaction with CDK5R1 stretch occupies residues 1736–1778 (HMLCLIEDYDALYKQISWGQTLLAKMDIQTQEALSPTSQKLGP). Required for centrosomal attachment, Golgi localization and CALM1 interaction stretches follow at residues 1736 to 1903 (HMLC…RPGS) and 1871 to 1880 (VITHQVLRKA). A disordered region spans residues 1883–1903 (NLELRPRAAHPGTSSPSRPGS). A compositionally biased stretch (polar residues) spans 1894–1903 (GTSSPSRPGS). Ser1903 bears the Phosphoserine mark.

As to quaternary structure, homodimer. Interacts with CDK5R1 (p35 form). CDK5RAP1, CDK5RAP2 and CDK5RAP3 show competitive binding to CDK5R1. May form a complex with CDK5R1 and CDK5. Interacts with pericentrin/PCNT; the interaction is leading to centrosomal and Golgi localization of CDK5RAP2 and PCNT. Interacts with AKAP9; the interaction targets CDK5RAP2 and AKAP9 to Golgi apparatus. Interacts with TUBG1; the interaction is leading to the centrosomal localization of CDK5RAP2 and TUBG1. Interacts with TUBGCP3. Interacts with CALM1. Interacts with CDC20. Interacts with CEP68; degradation of CEP68 in early mitosis leads to removal of CDK5RAP2 from the centrosome which promotes centriole disengagement and subsequent centriole separation. Interacts with NCKAP5L. Interacts with LGALS3BP; this interaction may connect the pericentrosomal complex to the gamma-tubulin ring complex (gTuRC) to promote microtubule assembly and acetylation. Contrary to human, chimpanzee, bovine and dog orthologous proteins, does not interact with EB1/MAPRE1, possibly due to a divergence at the level of the critical residue 939, which is a proline in MAPRE1-binding orthologs and a leucine in mouse and rat. Interacts with CCDC66. Associates (via CM1 motif) with TUBGCP2 of the gTuRC; the interaction plays a role in gTuRC activation. Post-translationally, phosphorylated in vitro by CDK5.

It is found in the cytoplasm. The protein resides in the cytoskeleton. It localises to the microtubule organizing center. Its subcellular location is the centrosome. The protein localises to the golgi apparatus. In terms of biological role, potential regulator of CDK5 activity via its interaction with CDK5R1. Negative regulator of centriole disengagement (licensing) which maintains centriole engagement and cohesion. Involved in regulation of mitotic spindle orientation. Plays a role in the spindle checkpoint activation by acting as a transcriptional regulator of both BUBR1 and MAD2 promoter. Together with EB1/MAPRE1, may promote microtubule polymerization, bundle formation, growth and dynamics at the plus ends. Regulates centrosomal maturation by recruitment of the gamma-tubulin ring complex (gTuRC) onto centrosomes. In complex with PDE4DIP isoform 13/MMG8/SMYLE, MAPRE1 and AKAP9, contributes to microtubules nucleation and extension from the centrosome to the cell periphery. Required for the recruitment of AKAP9 to centrosomes. Plays a role in neurogenesis. In Rattus norvegicus (Rat), this protein is CDK5 regulatory subunit-associated protein 2 (Cdk5rap2).